A 729-amino-acid polypeptide reads, in one-letter code: Cullin-6 (729 aa).

The region spanning 659–720 (DRKYEIKACI…EQLYIRRSEN (62 aa)) is the Cullin neddylation domain. A Glycyl lysine isopeptide (Lys-Gly) (interchain with G-Cter in NEDD8) cross-link involves residue lysine 673.

The protein belongs to the cullin family. As to quaternary structure, probably interacts with skr-3. Neddylated; which enhances the ubiquitination activity of SCF-like complex.

Its function is as follows. Probable core component of cullin-based SCF-like E3 ubiquitin-protein ligase complexes which mediate the ubiquitination and subsequent proteasomal degradation of target proteins. In Caenorhabditis elegans, this protein is Cullin-6 (cul-6).